The primary structure comprises 339 residues: Dihydroorotate dehydrogenase (quinone) (339 aa).

FMN-binding positions include 62–66 (AGMDK) and threonine 86. Lysine 66 is a substrate binding site. 111–115 (NRMGF) is a substrate binding site. Residues asparagine 139 and asparagine 172 each contribute to the FMN site. Asparagine 172 contacts substrate. The active-site Nucleophile is the serine 175. Position 177 (asparagine 177) interacts with substrate. Lysine 217 and threonine 245 together coordinate FMN. 246–247 (NT) contacts substrate. FMN is bound by residues glycine 268, glycine 297, and 318–319 (YS).

This sequence belongs to the dihydroorotate dehydrogenase family. Type 2 subfamily. As to quaternary structure, monomer. FMN serves as cofactor.

It is found in the cell membrane. It carries out the reaction (S)-dihydroorotate + a quinone = orotate + a quinol. It functions in the pathway pyrimidine metabolism; UMP biosynthesis via de novo pathway; orotate from (S)-dihydroorotate (quinone route): step 1/1. Functionally, catalyzes the conversion of dihydroorotate to orotate with quinone as electron acceptor. The sequence is that of Dihydroorotate dehydrogenase (quinone) from Shewanella oneidensis (strain ATCC 700550 / JCM 31522 / CIP 106686 / LMG 19005 / NCIMB 14063 / MR-1).